The following is a 97-amino-acid chain: Zinc metalloproteinase-disintegrin-like bothrojarin-4 (97 aa).

Positions Pro4–Asn90 constitute a Disintegrin domain. Positions 6, 9, 11, 13, 16, and 19 each coordinate Ca(2+). 7 cysteine pairs are disulfide-bonded: Cys7-Cys36, Cys18-Cys31, Cys20-Cys26, Cys30-Cys53, Cys44-Cys50, Cys49-Cys75, and Cys62-Cys82. N-linked (GlcNAc...) asparagine glycosylation is present at Asn32. A D/ECD-tripeptide; atypical (KCD) motif is present at residues Lys68 to Asp70.

Belongs to the venom metalloproteinase (M12B) family. P-III subfamily. P-IIIa sub-subfamily. In terms of assembly, monomer. Requires Zn(2+) as cofactor. In terms of tissue distribution, expressed by the venom gland.

Its subcellular location is the secreted. Functionally, the hemorrhagic metalloproteinase-disintegrin-like bothrojarin-1 is a potent inhibitor of collagen-induced platelet aggregation by blockage of alpha-2/beta-1 (ITGA2/ITGB1) integrin. It does not present any fibrinogen-clotting activity. This chain is Zinc metalloproteinase-disintegrin-like bothrojarin-4, found in Bothrops jararaca (Jararaca).